A 447-amino-acid chain; its full sequence is N-succinylarginine dihydrolase (447 aa).

Residues 19 to 28 (AGLSFGNEAS), Asn110, and 137 to 138 (HR) contribute to the substrate site. Glu174 is a catalytic residue. Arg214 serves as a coordination point for substrate. The active site involves His250. Residues Asp252 and Asn365 each contribute to the substrate site. Cys371 (nucleophile) is an active-site residue.

It belongs to the succinylarginine dihydrolase family. Homodimer.

The enzyme catalyses N(2)-succinyl-L-arginine + 2 H2O + 2 H(+) = N(2)-succinyl-L-ornithine + 2 NH4(+) + CO2. It functions in the pathway amino-acid degradation; L-arginine degradation via AST pathway; L-glutamate and succinate from L-arginine: step 2/5. Catalyzes the hydrolysis of N(2)-succinylarginine into N(2)-succinylornithine, ammonia and CO(2). The sequence is that of N-succinylarginine dihydrolase from Acinetobacter baumannii (strain ACICU).